The primary structure comprises 148 residues: Large ribosomal subunit protein bL9 (148 aa).

Belongs to the bacterial ribosomal protein bL9 family.

In terms of biological role, binds to the 23S rRNA. The polypeptide is Large ribosomal subunit protein bL9 (Bifidobacterium longum (strain DJO10A)).